The following is a 253-amino-acid chain: Phosphonates import ATP-binding protein PhnC (253 aa).

An ABC transporter domain is found at 4-247 (VRFEGVTKRF…QAVAMIYRAG (244 aa)). ATP is bound at residue 36–43 (GLSGSGKS).

It belongs to the ABC transporter superfamily. Phosphonates importer (TC 3.A.1.9.1) family. As to quaternary structure, the complex is composed of two ATP-binding proteins (PhnC), two transmembrane proteins (PhnE) and a solute-binding protein (PhnD).

Its subcellular location is the cell membrane. It carries out the reaction phosphonate(out) + ATP + H2O = phosphonate(in) + ADP + phosphate + H(+). Functionally, part of the ABC transporter complex PhnCDE involved in phosphonates import. Responsible for energy coupling to the transport system. The polypeptide is Phosphonates import ATP-binding protein PhnC (Frankia casuarinae (strain DSM 45818 / CECT 9043 / HFP020203 / CcI3)).